The primary structure comprises 102 residues: Small ribosomal subunit protein uS10 (102 aa).

Belongs to the universal ribosomal protein uS10 family. Part of the 30S ribosomal subunit.

Its function is as follows. Involved in the binding of tRNA to the ribosomes. The protein is Small ribosomal subunit protein uS10 of Brevibacillus brevis (strain 47 / JCM 6285 / NBRC 100599).